The chain runs to 888 residues: Potassium channel AKT6 (888 aa).

Residues 1 to 84 lie on the Cytoplasmic side of the membrane; it reads MEKKKVWFWG…PFDPRYRAWE (84 aa). A disordered region spans residues 10 to 31; sequence GVKDDGEGGGGRGGGRTKDAED. The helical transmembrane segment at 85–105 threads the bilayer; the sequence is TFLVFLVLYTAWASPFEFGFL. Topologically, residues 106–113 are extracellular; that stretch reads QKPRPPLS. The chain crosses the membrane as a helical span at residues 114-134; the sequence is ILDNIVNGFFAVDIVLTFFVA. Residues 135-155 are Cytoplasmic-facing; it reads FLDKVTYLLVDDPKRIAWRYA. A helical membrane pass occupies residues 156-176; it reads STWLIFDVVSTFPYEIFGSLL. Residues 177 to 184 lie on the Extracellular side of the membrane; it reads HESIQGYG. The helical; Voltage-sensor transmembrane segment at 185 to 205 threads the bilayer; the sequence is IFSMLRLWRLRRVSNCFARLE. Topologically, residues 206–219 are cytoplasmic; it reads KDRKYSYFWVRCSK. Residues 220-240 traverse the membrane as a helical segment; sequence LLLVTLFVIHCGACFLYSIAA. Over 241–267 the chain is Extracellular; sequence HYPDPSKTFMALTDENWKESPIAVRYN. Positions 268–287 form an intramembrane region, pore-forming; sequence TAMYWSITTFSTTGYGDIHG. At 288–291 the chain is on the extracellular side; it reads VNSR. The helical transmembrane segment at 292 to 312 threads the bilayer; that stretch reads EMTFILFYMVFNLGLSAYIIG. At 313–888 the chain is on the cytoplasmic side; that stretch reads NMTNLVVHVT…GDFLLLSRDP (576 aa). A nucleoside 3',5'-cyclic phosphate is bound at residue 398–519; that stretch reads LFHGISNDLL…IMNNLLQHLK (122 aa). 5 ANK repeats span residues 543–572, 576–605, 609–638, 640–669, and 673–702; these read DLPL…SPNE, DGRT…DPNI, EGNV…KLSL, SVSY…DVTL, and NGTT…DLDW. The KHA domain occupies 822-888; it reads RVTISSPENG…GDFLLLSRDP (67 aa).

This sequence belongs to the potassium channel family. Plant (TC 1.A.1.4) subfamily. In terms of assembly, the potassium channel is probably composed of a homo- or heterotetrameric complex of pore-forming subunits. Predominantly expressed in flowers; especially in pollen.

It is found in the membrane. Highly selective inward-rectifying potassium channel that could mediate potassium uptake in the pollen membrane. Plays an important role in pollen tube development. Assuming opened or closed conformations in response to the voltage difference across the membrane, the channel is activated by hyperpolarization. May interact with the cytoskeleton or with regulatory proteins. This chain is Potassium channel AKT6 (AKT6), found in Arabidopsis thaliana (Mouse-ear cress).